A 377-amino-acid chain; its full sequence is Cytoplasmic tRNA 2-thiolation protein 1 (377 aa).

The protein belongs to the TtcA family. CTU1/NCS6/ATPBD3 subfamily.

Its subcellular location is the cytoplasm. The protein operates within tRNA modification; 5-methoxycarbonylmethyl-2-thiouridine-tRNA biosynthesis. Its function is as follows. Plays a central role in 2-thiolation of mcm(5)S(2)U at tRNA wobble positions of tRNA(Lys), tRNA(Glu) and tRNA(Gln). Directly binds tRNAs and probably acts by catalyzing adenylation of tRNAs, an intermediate required for 2-thiolation. It is unclear whether it acts as a sulfurtransferase that transfers sulfur from thiocarboxylated URM1 onto the uridine of tRNAs at wobble position. Prior mcm(5) tRNA modification by the elongator complex is required for 2-thiolation. May also be involved in protein urmylation. The polypeptide is Cytoplasmic tRNA 2-thiolation protein 1 (Debaryomyces hansenii (strain ATCC 36239 / CBS 767 / BCRC 21394 / JCM 1990 / NBRC 0083 / IGC 2968) (Yeast)).